We begin with the raw amino-acid sequence, 259 residues long: 1,2-dihydroxy-1,2-dihydronaphthalene dehydrogenase (259 aa).

An NAD(+)-binding site is contributed by 8-32; sequence SITGAGSGIGLELVRSFKSAGYYVS. Residue Ser140 coordinates substrate. Residue Tyr153 is the Proton acceptor of the active site.

The protein belongs to the short-chain dehydrogenases/reductases (SDR) family.

It catalyses the reaction (1R,2S)-1,2-dihydronaphthalene-1,2-diol + NAD(+) = naphthalene-1,2-diol + NADH + H(+). The catalysed reaction is cis-1,2-dihydroxy-1,2-dihydrodibenzothiophene + NAD(+) = 1,2-dihydroxydibenzothiophene + NADH + H(+). The protein operates within aromatic compound metabolism; naphthalene degradation. Functionally, catalyzes the oxidation of naphthalene dihydrodiol into 1,2-dihydroxynaphthalene. This is 1,2-dihydroxy-1,2-dihydronaphthalene dehydrogenase (doxE) from Pseudomonas sp. (strain C18).